Consider the following 364-residue polypeptide: Cyclin-D3-2 (364 aa).

The segment at 331–364 (PPGRPIKRGAAAATTADPLPADEESRDAWPPYAA) is disordered. Residues 340-349 (AAAATTADPL) are compositionally biased toward low complexity.

Belongs to the cyclin family. Cyclin D subfamily.

This is Cyclin-D3-2 (CYCD3-2) from Oryza sativa subsp. japonica (Rice).